The sequence spans 538 residues: Eukaryotic translation initiation factor 3 subunit L (538 aa).

Positions 305 to 513 (TFSDILLYIQ…IHIADTKVSH (209 aa)) constitute a PCI domain.

Belongs to the eIF-3 subunit L family. As to quaternary structure, component of the eukaryotic translation initiation factor 3 (eIF-3) complex. The eIF-3 complex interacts with pix.

Its subcellular location is the cytoplasm. Component of the eukaryotic translation initiation factor 3 (eIF-3) complex, which is involved in protein synthesis of a specialized repertoire of mRNAs and, together with other initiation factors, stimulates binding of mRNA and methionyl-tRNAi to the 40S ribosome. The eIF-3 complex specifically targets and initiates translation of a subset of mRNAs involved in cell proliferation. This Drosophila mojavensis (Fruit fly) protein is Eukaryotic translation initiation factor 3 subunit L.